A 523-amino-acid chain; its full sequence is GMP synthase [glutamine-hydrolyzing] (523 aa).

The Glutamine amidotransferase type-1 domain maps to 8-205 (KILILDFGSQ…VVDICGCETN (198 aa)). Residue cysteine 85 is the Nucleophile of the active site. Residues histidine 179 and glutamate 181 contribute to the active site. A GMPS ATP-PPase domain is found at 206 to 398 (WTAENIIEDA…LGLPAEMLNR (193 aa)). Residue 233 to 239 (SGGVDSS) participates in ATP binding.

As to quaternary structure, homodimer.

It carries out the reaction XMP + L-glutamine + ATP + H2O = GMP + L-glutamate + AMP + diphosphate + 2 H(+). It functions in the pathway purine metabolism; GMP biosynthesis; GMP from XMP (L-Gln route): step 1/1. Catalyzes the synthesis of GMP from XMP. In Histophilus somni (strain 2336) (Haemophilus somnus), this protein is GMP synthase [glutamine-hydrolyzing].